A 350-amino-acid polypeptide reads, in one-letter code: Flap endonuclease 1 (350 aa).

Residues 1–102 (MGVTELGKLI…IEIEKRRRVR (102 aa)) are N-domain. 7 residues coordinate Mg(2+): Asp31, Asp84, Glu156, Glu158, Asp177, Asp179, and Asp241. The I-domain stretch occupies residues 120–263 (EARKYAQRAL…RALRLIQEYG (144 aa)).

It belongs to the XPG/RAD2 endonuclease family. FEN1 subfamily. Interacts with PCNA. PCNA stimulates the nuclease activity without altering cleavage specificity. Mg(2+) is required as a cofactor.

In terms of biological role, structure-specific nuclease with 5'-flap endonuclease and 5'-3' exonuclease activities involved in DNA replication and repair. During DNA replication, cleaves the 5'-overhanging flap structure that is generated by displacement synthesis when DNA polymerase encounters the 5'-end of a downstream Okazaki fragment. Binds the unpaired 3'-DNA end and kinks the DNA to facilitate 5' cleavage specificity. Cleaves one nucleotide into the double-stranded DNA from the junction in flap DNA, leaving a nick for ligation. Also involved in the base excision repair (BER) pathway. Acts as a genome stabilization factor that prevents flaps from equilibrating into structures that lead to duplications and deletions. Also possesses 5'-3' exonuclease activity on nicked or gapped double-stranded DNA. The sequence is that of Flap endonuclease 1 from Caldivirga maquilingensis (strain ATCC 700844 / DSM 13496 / JCM 10307 / IC-167).